Consider the following 156-residue polypeptide: Small ribosomal subunit protein uS7 (156 aa).

Belongs to the universal ribosomal protein uS7 family. As to quaternary structure, part of the 30S ribosomal subunit. Contacts proteins S9 and S11.

Its function is as follows. One of the primary rRNA binding proteins, it binds directly to 16S rRNA where it nucleates assembly of the head domain of the 30S subunit. Is located at the subunit interface close to the decoding center, probably blocks exit of the E-site tRNA. This is Small ribosomal subunit protein uS7 from Wigglesworthia glossinidia brevipalpis.